The primary structure comprises 101 residues: Small ribosomal subunit protein uS14 (101 aa).

The protein belongs to the universal ribosomal protein uS14 family. In terms of assembly, part of the 30S ribosomal subunit. Contacts proteins S3 and S10.

In terms of biological role, binds 16S rRNA, required for the assembly of 30S particles and may also be responsible for determining the conformation of the 16S rRNA at the A site. This is Small ribosomal subunit protein uS14 from Shewanella woodyi (strain ATCC 51908 / MS32).